A 151-amino-acid chain; its full sequence is Ribosome maturation factor RimP (151 aa).

The protein belongs to the RimP family.

It is found in the cytoplasm. In terms of biological role, required for maturation of 30S ribosomal subunits. The polypeptide is Ribosome maturation factor RimP (Shewanella piezotolerans (strain WP3 / JCM 13877)).